The primary structure comprises 251 residues: Hydroxyacylglutathione hydrolase (251 aa).

Residues His53, His55, Asp57, His58, His110, Asp127, and His165 each coordinate Zn(2+).

This sequence belongs to the metallo-beta-lactamase superfamily. Glyoxalase II family. In terms of assembly, monomer. Zn(2+) serves as cofactor.

The catalysed reaction is an S-(2-hydroxyacyl)glutathione + H2O = a 2-hydroxy carboxylate + glutathione + H(+). The protein operates within secondary metabolite metabolism; methylglyoxal degradation; (R)-lactate from methylglyoxal: step 2/2. Its function is as follows. Thiolesterase that catalyzes the hydrolysis of S-D-lactoyl-glutathione to form glutathione and D-lactic acid. The sequence is that of Hydroxyacylglutathione hydrolase from Shigella boydii serotype 18 (strain CDC 3083-94 / BS512).